A 304-amino-acid polypeptide reads, in one-letter code: L-xylo-3-hexulose reductase (304 aa).

Ile-19, Asp-68, and Asn-107 together coordinate NADP(+). Active-site proton donor residues include Ser-163 and Ser-164. Residues Tyr-177, Lys-181, and Ala-209 each contribute to the NADP(+) site. Tyr-177 acts as the Proton acceptor in catalysis. Lys-181 serves as the catalytic Lowers pKa of active site Tyr.

It belongs to the short-chain dehydrogenases/reductases (SDR) family.

The enzyme catalyses D-sorbitol + NADP(+) = L-xylo-3-hexulose + NADPH + H(+). It participates in carbohydrate degradation. Its function is as follows. L-xylulose reductase involved in the catabolism of D-galactose through an oxidoreductive pathway. Catalyzes the NADPH-dependent reduction of L-xylo-3-hexulose. Is also active with D-ribulose and L-xylulose, and to a lesser extent with D-xylulose, D-fructose and L- and D-sorbose. In the reverse reaction, shows activity with D-sorbitol and D-mannitol, low activity with xylitol, but no activity with galactitol, ribitol, and L- and D-arabitol. This Hypocrea jecorina (strain QM6a) (Trichoderma reesei) protein is L-xylo-3-hexulose reductase.